The sequence spans 329 residues: Phosphatidylcholine:ceramide cholinephosphotransferase 3 (329 aa).

Over 1 to 26 (MAVPPVEMYSGSFWNRMRKPLPLRTQ) the chain is Cytoplasmic. Residues 27 to 47 (VIRFTVVFVIVSFILAVALQI) form a helical membrane-spanning segment. Over 48 to 74 (THERMPDPKVTKPLPDLGFELLTKVPG) the chain is Extracellular. The helical transmembrane segment at 75 to 95 (MYVLADCCIGFLNILSVFTAF) threads the bilayer. At 96–147 (KLYLLHRHCVGSGEPELPCNIPGVSRFFLSVWLCKENCRIELRNIHTIAWIR) the chain is on the cytoplasmic side. A helical membrane pass occupies residues 148-168 (FITSYALLLLFRSAVIVMTSL). At 169–211 (PAPDDLCQNPPKIENPVKNVILTVLTAGAGSIHCGDLMYSGHT) the chain is on the extracellular side. A helical membrane pass occupies residues 212–232 (VILTLHLMFHWIYGAMVHWSF). Arginine 233 is a topological domain (cytoplasmic). Residues 234 to 254 (PVVTVVAIFGYYCIVASRFHY) traverse the membrane as a helical segment. At 255–257 (TDD) the chain is on the extracellular side. A helical membrane pass occupies residues 258–278 (VLVAIYLTIATFIAVGHNADG). Topologically, residues 279–329 (APWQLQLFIRWWPCCGANSREVTEDSQPVMVAFKSEAAGQSSRKVVDERNH) are cytoplasmic.

It belongs to the sphingomyelin synthase family.

It is found in the membrane. The catalysed reaction is an N-acylsphing-4-enine + a 1,2-diacyl-sn-glycero-3-phosphocholine = a sphingomyelin + a 1,2-diacyl-sn-glycerol. The enzyme catalyses an N-acylsphinganine + a 1,2-diacyl-sn-glycero-3-phosphocholine = an N-acylsphinganine-1-phosphocholine + a 1,2-diacyl-sn-glycerol. It carries out the reaction an N-acylsphing-4-enine + a 1,2-diacyl-sn-glycero-3-phosphoethanolamine = an N-acylsphing-4-enine 1-phosphoethanolamine + a 1,2-diacyl-sn-glycerol. It catalyses the reaction an N-acylsphinganine + a 1,2-diacyl-sn-glycero-3-phosphoethanolamine = an N-acylsphinganine-1-phosphoethanolamine + a 1,2-diacyl-sn-glycerol. Its function is as follows. Bifunctional sphingomyelin (SM)/ethanolamine phosphorylceramide (EPC) synthase with minimal inositol phosphorylceramide (IPC) synthase activity. Specificity is likely to be defined by residues in the lumenal catalytic domain that interact with the polar head groups of the phospholipid donors. SM is synthesized by both stages of the parasite life cycle, bloodstream forms (BSF) and procyclic forms (PCF), by transferring the phosphocholine from a 1,2-diacyl-sn-glycero-3-phosphocholine to an N-acylsphing-4-enine (ceramide) or an N-acylsphinganine (dihydroceramide). Similarly, EPC is synthesized by transferring phosphoethanolamine from a 1,2-diacyl-sn-glycero-3-phosphoethanolamine to ceramide or dihydroceramide by BSF and PCF, while IPC is confined to PCF. The ceramide/dihydroceramide ratios are skewed towards dihydroceramide in PCF parasites and ceramide in BSF parasites, this is likely due to differential expression and/or regulation of dihydroceramide desaturase, the enzyme responsible for converting dihydroceramide to ceramide. This chain is Phosphatidylcholine:ceramide cholinephosphotransferase 3, found in Trypanosoma brucei brucei.